Here is a 570-residue protein sequence, read N- to C-terminus: Nucleoprotein (570 aa).

Residues 54–236 (LRKTKRTDDD…ITKEESSINI (183 aa)) are binding site for the cap structure m7GTP. Residues 332-356 (DLTKKPDAVPEPGAAPRPAERKGQN) form a disordered region. Residues aspartate 386 and glutamate 388 each contribute to the Mg(2+) site. Mn(2+) contacts are provided by aspartate 386 and glutamate 388. 4 residues coordinate Zn(2+): glutamate 396, cysteine 503, histidine 506, and cysteine 531. Aspartate 535 provides a ligand contact to Mg(2+). Aspartate 535 lines the Mn(2+) pocket.

Belongs to the arenaviridae nucleocapsid protein family. As to quaternary structure, homomultimerizes to form the nucleocapsid. Binds to viral genomic RNA. Interacts with glycoprotein G2. Interacts with protein Z; this interaction probably directs the encapsidated genome to budding sites. Interacts with protein L; this interaction does not interfere with Z-L interaction. Interacts with host IKBKE (via Protein kinase domain); the interaction inhibits IKBKE kinase activity.

It is found in the virion. Its subcellular location is the host cytoplasm. Encapsidates the genome, protecting it from nucleases. The encapsidated genomic RNA is termed the nucleocapsid (NC). Serves as template for viral transcription and replication. The increased presence of protein N in host cell does not seem to trigger the switch from transcription to replication as observed in other negative strain RNA viruses. Through the interaction with host IKBKE, strongly inhibits the phosphorylation and nuclear translocation of host IRF3, a protein involved in interferon activation pathway, leading to the inhibition of interferon-beta and IRF3-dependent promoters activation. Also encodes a functional 3'-5' exoribonuclease that degrades preferentially dsRNA substrates and thereby participates in the suppression of interferon induction. This is Nucleoprotein from Artibeus (neotropical fruit bats).